We begin with the raw amino-acid sequence, 260 residues long: NAD kinase (260 aa).

Asp-54 (proton acceptor) is an active-site residue. Residues 54-55 (DG), 123-124 (ND), Arg-150, Asp-152, and 163-168 (TAYSLS) contribute to the NAD(+) site.

This sequence belongs to the NAD kinase family. A divalent metal cation serves as cofactor.

It is found in the cytoplasm. The enzyme catalyses NAD(+) + ATP = ADP + NADP(+) + H(+). Involved in the regulation of the intracellular balance of NAD and NADP, and is a key enzyme in the biosynthesis of NADP. Catalyzes specifically the phosphorylation on 2'-hydroxyl of the adenosine moiety of NAD to yield NADP. The polypeptide is NAD kinase (Caldicellulosiruptor saccharolyticus (strain ATCC 43494 / DSM 8903 / Tp8T 6331)).